The following is a 237-amino-acid chain: Carbohydrate deacetylase (237 aa).

Mg(2+) contacts are provided by H59 and H125.

Belongs to the YdjC deacetylase family. Mg(2+) is required as a cofactor.

In terms of biological role, probably catalyzes the deacetylation of acetylated carbohydrates an important step in the degradation of oligosaccharides. This chain is Carbohydrate deacetylase, found in Halalkalibacterium halodurans (strain ATCC BAA-125 / DSM 18197 / FERM 7344 / JCM 9153 / C-125) (Bacillus halodurans).